Reading from the N-terminus, the 781-residue chain is Pyrin (781 aa).

One can recognise a Pyrin domain in the interval methionine 1–glutamine 92. A compositionally biased stretch (polar residues) spans glutamate 93–glycine 111. Residues glutamate 93–cysteine 226 are disordered. Positions asparagine 113–glycine 126 are enriched in basic and acidic residues. Positions leucine 153 to glutamate 163 are enriched in basic residues. Position 242 is a phosphoserine (serine 242). Residues lysine 266–arginine 280 form an interaction with RELA region. Disordered regions lie at residues asparagine 270 to proline 322 and glutamate 336 to proline 373. A B box-type zinc finger spans residues glutamine 370–isoleucine 412. The stretch at glutamate 413–serine 442 forms a coiled coil. The short motif at lysine 420 to glycine 437 is the Nuclear localization signal element. The required for homotrimerization and induction of pyroptosomes stretch occupies residues lysine 420–methionine 582. The B30.2/SPRY domain maps to serine 580 to valine 775.

In terms of assembly, homotrimer. Interacts (via the B box-type zinc finger) with PSTPIP1. Interacts (via the B30.2/SPRY domain) with several components of the inflammasome complex, including CASP1 p20 and p10 subunits, CASP5, PYCARD, NLRP1, NLRP2 and NLRP3, as well as with unprocessed IL1B; this interaction may lead to autophagic degradation of these proteins. Component of the AIM2 PANoptosome complex, a multiprotein complex that drives inflammatory cell death (PANoptosis). Interacts with NFKBIA and RELA. Interacts weakly with VASP and ACTR3. Interacts with active ULK1 (phosphorylated on 'Ser-317') and BECN1 simultaneously. Also interacts with ATG16L1 (via WD repeats), and with ATG8 family members, including GABARAP, GABARAPL1 and, to a lesser extent, GABARAPL2, MAP1LC3A/LC3A and MAP1LC3C/LC3C. Interacts with TRIM21. Interacts with YWHAB, YWHAE, YWHAG, YWHAH, YWHAQ and YWHAZ; the interaction is required for the down-regulation of pyrin pro-inflammatory activity. In terms of processing, cleaved by CASP1. The N-terminal cleavage product localizes to the nucleus as a filamentous network and to the cytoplasm, interacts more strongly with RELA and NFKBIA than the full-length protein, enhances the nuclear localization of RELA and induces NFKBIA proteolysis. The C-terminal cleavage product localizes to the cytoplasm. Phosphorylation at Ser-242 is required for the interaction with 14-3-3 proteins and down-regulation of pyrin pro-inflammatory activity. Post-translationally, degraded along with the delivery of its substrates to autolysosomal compartments (at protein level). Expressed in peripheral blood leukocytes, particularly in mature granulocytes and to a lesser extent in monocytes but not in lymphocytes. Detected in spleen, lung and muscle, probably as a result of leukocyte infiltration in these tissues. Not expressed in thymus, prostate, testis, ovary, small intestine, colon, heart, brain, placenta, liver, kidney, pancreas. Expression detected in several myeloid leukemic, colon cancer, and prostate cancer cell lines.

The protein resides in the cytoplasm. The protein localises to the cytoskeleton. Its subcellular location is the cell projection. It localises to the ruffle. It is found in the lamellipodium. The protein resides in the nucleus. The protein localises to the cytoplasmic vesicle. Its subcellular location is the autophagosome. Its function is as follows. Involved in the regulation of innate immunity and the inflammatory response in response to IFNG/IFN-gamma. Organizes autophagic machinery by serving as a platform for the assembly of ULK1, Beclin 1/BECN1, ATG16L1, and ATG8 family members and recognizes specific autophagy targets, thus coordinating target recognition with assembly of the autophagic apparatus and initiation of autophagy. Acts as an autophagy receptor for the degradation of several inflammasome components, including CASP1, NLRP1 and NLRP3, hence preventing excessive IL1B- and IL18-mediated inflammation. However, it can also have a positive effect in the inflammatory pathway, acting as an innate immune sensor that triggers PYCARD/ASC specks formation, caspase-1 activation, and IL1B and IL18 production. Together with AIM2, also acts as a mediator of pyroptosis, necroptosis and apoptosis (PANoptosis), an integral part of host defense against pathogens, in response to bacterial infection. It is required for PSTPIP1-induced PYCARD/ASC oligomerization and inflammasome formation. Recruits PSTPIP1 to inflammasomes, and is required for PSTPIP1 oligomerization. This is Pyrin from Homo sapiens (Human).